Consider the following 245-residue polypeptide: Acetylglutamate kinase (245 aa).

Residues 41–42, Arg-63, and Asn-156 contribute to the substrate site; that span reads GG.

It belongs to the acetylglutamate kinase family. ArgB subfamily.

The protein resides in the cytoplasm. It carries out the reaction N-acetyl-L-glutamate + ATP = N-acetyl-L-glutamyl 5-phosphate + ADP. It functions in the pathway amino-acid biosynthesis; L-arginine biosynthesis; N(2)-acetyl-L-ornithine from L-glutamate: step 2/4. Its function is as follows. Catalyzes the ATP-dependent phosphorylation of N-acetyl-L-glutamate. The chain is Acetylglutamate kinase from Streptococcus mutans serotype c (strain ATCC 700610 / UA159).